The primary structure comprises 415 residues: MEDLCVANTLFALNLFKHLAKASPTQNLFLSPWSISSTMAMVYMGSRGSTEDQMAKVLQFNEVGANAVTPMTPENFTSCGFMQQIQKGSYPDAILQAQAADKIHSSFRSLSSAINASTGNYLLESVNKLFGEKSASFREEYIRLCQKYYSSEPQAVDFLECAEEARKKINSWVKTQTKGKIPNLLPEGSVDGDTRMVLVNAVYFKGKWKTPFEKKLNGLYPFRVNSAQRTPVQMMYLREKLNIGYIEDLKAQILELPYAGDVSMFLLLPDEIADVSTGLELLESEITYDKLNKWTSKDKMAEDEVEVYIPQFKLEEHYELRSILRSMGMEDAFNKGRANFSGMSERNDLFLSEVFHQAMVDVNEEGTEAAAGTGGVMTGRTGHGGPQFVADHPFLFLIMHKITNCILFFGRFSSP.

Cysteines 5 and 405 form a disulfide. Residues asparagine 75, asparagine 115, and asparagine 339 are each glycosylated (N-linked (GlcNAc...) asparagine).

The protein belongs to the serpin family. Ov-serpin subfamily. In terms of assembly, interacts with PSMB1. In terms of processing, the signal sequence is not cleaved.

It is found in the cytoplasm. The protein resides in the secreted. It localises to the extracellular space. Inhibits urokinase-type plasminogen activator. The monocyte derived PAI-2 is distinct from the endothelial cell-derived PAI-1. The chain is Plasminogen activator inhibitor 2 (SERPINB2) from Homo sapiens (Human).